A 244-amino-acid polypeptide reads, in one-letter code: MASRLAKSAICAARVRPVLSSRTIPAAATTLTSTRSVSNVPTEDPKTKAQSIIDALPGNSLVSKTAILSAGAGLSIAAISNELYVFSEETVAAFCLLSVFAGVAKMAGPMYKEWAETQIQKQKDILNGARANHTNAVKQRIENVKQLSGVVDITKALFEVSKETARLEAQAYELEQRTALAAEAKKVLDSWVQYEGQVKVRQQRELAQTVISKVQKELENPKVIQQILQQSVTDVERIFAAKPQ.

Residues 1-36 constitute a mitochondrion transit peptide; sequence MASRLAKSAICAARVRPVLSSRTIPAAATTLTSTRS.

Belongs to the eukaryotic ATPase B chain family. In terms of assembly, F-type ATPases have 2 components, CF(1) - the catalytic core - and CF(0) - the membrane proton channel. In yeast, the dimeric form of ATP synthase consists of 17 polypeptides: alpha, beta, gamma, delta, epsilon, 4 (B), 5 (OSCP), 6 (A), 8, 9 (C), d, E (Tim11), f, g, h, i/j and k.

The protein localises to the mitochondrion. Its subcellular location is the mitochondrion inner membrane. Functionally, mitochondrial membrane ATP synthase (F(1)F(0) ATP synthase or Complex V) produces ATP from ADP in the presence of a proton gradient across the membrane which is generated by electron transport complexes of the respiratory chain. F-type ATPases consist of two structural domains, F(1) - containing the extramembraneous catalytic core, and F(0) - containing the membrane proton channel, linked together by a central stalk and a peripheral stalk. During catalysis, ATP synthesis in the catalytic domain of F(1) is coupled via a rotary mechanism of the central stalk subunits to proton translocation. Part of the complex F(0) domain and the peripheric stalk, which acts as a stator to hold the catalytic alpha(3)beta(3) subcomplex and subunit a/ATP6 static relative to the rotary elements. The chain is ATP synthase subunit 4, mitochondrial (ATP4) from Paracoccidioides brasiliensis.